Here is a 421-residue protein sequence, read N- to C-terminus: Gamma-glutamyl phosphate reductase (421 aa).

This sequence belongs to the gamma-glutamyl phosphate reductase family.

The protein localises to the cytoplasm. It catalyses the reaction L-glutamate 5-semialdehyde + phosphate + NADP(+) = L-glutamyl 5-phosphate + NADPH + H(+). Its pathway is amino-acid biosynthesis; L-proline biosynthesis; L-glutamate 5-semialdehyde from L-glutamate: step 2/2. Its function is as follows. Catalyzes the NADPH-dependent reduction of L-glutamate 5-phosphate into L-glutamate 5-semialdehyde and phosphate. The product spontaneously undergoes cyclization to form 1-pyrroline-5-carboxylate. The chain is Gamma-glutamyl phosphate reductase from Pseudomonas paraeruginosa (strain DSM 24068 / PA7) (Pseudomonas aeruginosa (strain PA7)).